A 303-amino-acid chain; its full sequence is Uridylate-specific endoribonuclease C (303 aa).

A signal peptide spans 1–16 (MVYLVFLCLLPSLISG). The 272-residue stretch at 32 to 303 (TDAEIQSLAE…KRFVASSYPI (272 aa)) folds into the EndoU domain. Catalysis depends on residues His-181, His-196, and Lys-239. The N-linked (GlcNAc...) asparagine glycan is linked to Asn-287.

It belongs to the ENDOU family. As to quaternary structure, monomer. Mn(2+) serves as cofactor.

The protein resides in the secreted. It catalyses the reaction ribonucleotidyl-uridine-RNA = a 5'-end dephospho-uridine-RNA + a 3'-end 2',3'-cyclophospho-ribonucleotide-RNA. Its function is as follows. Endoribonuclease that cleaves single-stranded RNAs at 5' of uridylates and releases a product with a 2',3'-cyclic phosphate at the 3'-end. The protein is Uridylate-specific endoribonuclease C (endou-c) of Xenopus laevis (African clawed frog).